The primary structure comprises 1081 residues: DNA polymerase catalytic subunit (1081 aa).

Belongs to the DNA polymerase type-B family. Forms a complex with the ssDNA-binding protein UL29, the DNA polymerase processivity factor, and the alkaline exonuclease. Interacts with the putative helicase-primase complex subunit UL8; this interaction may coordinate leading and lagging strand DNA synthesis at the replication fork.

It localises to the host nucleus. The catalysed reaction is DNA(n) + a 2'-deoxyribonucleoside 5'-triphosphate = DNA(n+1) + diphosphate. It carries out the reaction Endonucleolytic cleavage to 5'-phosphomonoester.. Its function is as follows. Replicates viral genomic DNA. The replication complex is composed of six viral proteins: the DNA polymerase, processivity factor, primase, primase-associated factor, helicase, and ssDNA-binding protein. Additionally, the polymerase contains an intrinsic ribonuclease H (RNase H) activity that specifically degrades RNA/DNA heteroduplexes or duplex DNA substrates in the 5' to 3' direction. Therefore, it can catalyze the excision of the RNA primers that initiate the synthesis of Okazaki fragments at a replication fork during viral DNA replication. The chain is DNA polymerase catalytic subunit (UL30) from Psittacid herpesvirus 1 (isolate Amazon parrot/-/97-0001/1997) (PsHV-1).